Consider the following 373-residue polypeptide: SAM domain-containing protein SAMSN-1 (373 aa).

The segment at 1–72 (MLKRKPSNVS…GGGLGKKMRA (72 aa)) is disordered. Positions 20-25 (RSSSFG) match the Important for interaction with 14-3-3 proteins motif. A phosphoserine mark is found at serine 23 and serine 34. Basic and acidic residues predominate over residues 37-48 (KPDDSTEAHEGD). Positions 50–61 (TNGSGEQSKTSN) are enriched in polar residues. Serine 74 is modified (phosphoserine). Residue threonine 76 is modified to Phosphothreonine. Residues serine 90 and serine 119 each carry the phosphoserine modification. Residues 91–153 (EEKDEEDGEN…DGTSNRDSFR (63 aa)) are disordered. The segment covering 123-146 (SDSMDSLYSGQSSSSGITSCSDGT) has biased composition (low complexity). A Phosphotyrosine modification is found at tyrosine 160. The SH3 domain occupies 163-224 (PFCGRARVHT…KFIYVDVISE (62 aa)). The SAM domain maps to 241-305 (KKSKTLQEFL…LSAAENFLEE (65 aa)). The interval 337-359 (DSGCYISSGNSDNGKEDLESENL) is disordered.

As to quaternary structure, interacts with FASLG. Interacts with phosphotyrosine containing proteins. Interacts (via SH3 domain) with CTTN. Interacts (phosphorylated at Ser-23) with YWHAB, YWHAE, YWHAG, YWHAH, YWHAZ and SFN. Interacts directly with SAP30 and HDAC1. Identified in a complex with SAP30 and HDAC1. Detected in peripheral blood B-cells (at protein level). Detected in spleen, liver and peripheral blood.

Its subcellular location is the nucleus. It localises to the cytoplasm. The protein localises to the cell projection. The protein resides in the ruffle. Its function is as follows. Negative regulator of B-cell activation. Down-regulates cell proliferation (in vitro). Promotes RAC1-dependent membrane ruffle formation and reorganization of the actin cytoskeleton. Regulates cell spreading and cell polarization. Stimulates HDAC1 activity. Regulates LYN activity by modulating its tyrosine phosphorylation. This is SAM domain-containing protein SAMSN-1 (SAMSN1) from Homo sapiens (Human).